The primary structure comprises 354 residues: MTLQTDDFAPAPARRVVSAAPASPQEQAIERALRPKLLQEYVGQVKAREQLEIFIGAARQRGEALDHVLLFGPPGLGKTTLSHIIAAELGVNLRQTSGPVLEKPKDLAALLTNLENRDVLFIDEIHRLSPVVEEILYPALEDYQIDIMIGEGPAARSIKLDLQPFTLVGATTRAGMLTNPLRDRFGIVARLEFYSAQELARIVKRSAGLLGVPMDDAGGLEIARRSRGTPRIANRLLRRVRDYTQVKADGHITKDIAERALAMLDVDPEGLDVMDRKLLEAVIHRFDGGPVGLDNIAASIGEETGTIEDVIEPYLIQQGFLQRTPRGRIATQAAFRHLGIAAAPGAQAPGLFAV.

Residues 1 to 22 (MTLQTDDFAPAPARRVVSAAPA) form a disordered region. A large ATPase domain (RuvB-L) region spans residues 5-194 (TDDFAPAPAR…FGIVARLEFY (190 aa)). The span at 9–22 (APAPARRVVSAAPA) shows a compositional bias: low complexity. ATP-binding positions include Leu33, Arg34, Gly75, Lys78, Thr79, Thr80, 141–143 (EDY), Arg184, Tyr194, and Arg231. A Mg(2+)-binding site is contributed by Thr79. The tract at residues 195–265 (SAQELARIVK…IAERALAMLD (71 aa)) is small ATPAse domain (RuvB-S). The segment at 268–354 (PEGLDVMDRK…GAQAPGLFAV (87 aa)) is head domain (RuvB-H). DNA is bound by residues Arg323 and Arg328.

Belongs to the RuvB family. As to quaternary structure, homohexamer. Forms an RuvA(8)-RuvB(12)-Holliday junction (HJ) complex. HJ DNA is sandwiched between 2 RuvA tetramers; dsDNA enters through RuvA and exits via RuvB. An RuvB hexamer assembles on each DNA strand where it exits the tetramer. Each RuvB hexamer is contacted by two RuvA subunits (via domain III) on 2 adjacent RuvB subunits; this complex drives branch migration. In the full resolvosome a probable DNA-RuvA(4)-RuvB(12)-RuvC(2) complex forms which resolves the HJ.

The protein resides in the cytoplasm. The catalysed reaction is ATP + H2O = ADP + phosphate + H(+). In terms of biological role, the RuvA-RuvB-RuvC complex processes Holliday junction (HJ) DNA during genetic recombination and DNA repair, while the RuvA-RuvB complex plays an important role in the rescue of blocked DNA replication forks via replication fork reversal (RFR). RuvA specifically binds to HJ cruciform DNA, conferring on it an open structure. The RuvB hexamer acts as an ATP-dependent pump, pulling dsDNA into and through the RuvAB complex. RuvB forms 2 homohexamers on either side of HJ DNA bound by 1 or 2 RuvA tetramers; 4 subunits per hexamer contact DNA at a time. Coordinated motions by a converter formed by DNA-disengaged RuvB subunits stimulates ATP hydrolysis and nucleotide exchange. Immobilization of the converter enables RuvB to convert the ATP-contained energy into a lever motion, pulling 2 nucleotides of DNA out of the RuvA tetramer per ATP hydrolyzed, thus driving DNA branch migration. The RuvB motors rotate together with the DNA substrate, which together with the progressing nucleotide cycle form the mechanistic basis for DNA recombination by continuous HJ branch migration. Branch migration allows RuvC to scan DNA until it finds its consensus sequence, where it cleaves and resolves cruciform DNA. The protein is Holliday junction branch migration complex subunit RuvB of Verminephrobacter eiseniae (strain EF01-2).